We begin with the raw amino-acid sequence, 444 residues long: Probable kynurenine--oxoglutarate transaminase BNA3 (444 aa).

Lys271 carries the N6-(pyridoxal phosphate)lysine modification.

It belongs to the class-I pyridoxal-phosphate-dependent aminotransferase family. As to quaternary structure, homodimer. Requires pyridoxal 5'-phosphate as cofactor.

It is found in the cytoplasm. The protein resides in the mitochondrion. The enzyme catalyses L-kynurenine + 2-oxoglutarate = kynurenate + L-glutamate + H2O. It participates in amino-acid degradation; L-kynurenine degradation; kynurenate from L-kynurenine: step 1/2. Functionally, catalyzes the irreversible transamination of the L-tryptophan metabolite L-kynurenine to form kynurenic acid (KA). The polypeptide is Probable kynurenine--oxoglutarate transaminase BNA3 (BNA3) (Saccharomyces cerevisiae (strain ATCC 204508 / S288c) (Baker's yeast)).